An 87-amino-acid chain; its full sequence is U14-lycotoxin-Ls1a (87 aa).

The signal sequence occupies residues 1–20 (MNSKVFAVLLLLALLTCVLS). A WAP domain is found at 21–66 (EKYCPTPRNTSCKKMNIRNNCCRDSDCTSNAFCCAEPCGNFCHKAS). 5 disulfides stabilise this stretch: C24–C54, C32–C58, C41–C53, C42–C80, and C47–C62.

The protein belongs to the venom protein 11 family. 01 (wap-1) subfamily. In terms of processing, contains 5 disulfide bonds. In terms of tissue distribution, expressed by the venom gland.

It localises to the secreted. In terms of biological role, has antibacterial activity. This chain is U14-lycotoxin-Ls1a, found in Lycosa singoriensis (Wolf spider).